Here is a 753-residue protein sequence, read N- to C-terminus: A-kinase anchor protein 200 (753 aa).

Disordered regions lie at residues 1-345, 462-482, 531-604, 620-641, and 658-684; these read MGKA…QIEA, VETR…PSRV, TEQE…IDPA, VEKE…SDEQ, and VEET…DKEN. The N-myristoyl glycine moiety is linked to residue glycine 2. Composition is skewed to basic and acidic residues over residues 8–38 and 59–77; these read RSID…DQKT and AVEK…DLTT. The span at 81–93 shows a compositional bias: low complexity; sequence AAVAEGGDAVAET. Residues 119–148 are F-actin binding; it reads KSKSKKDKVKKKWSFRSISFGKKDKQKPAK. The segment covering 120–132 has biased composition (basic residues); sequence SKSKKDKVKKKWS. Serine 132, serine 135, and serine 137 each carry phosphoserine. The segment covering 139 to 151 has biased composition (basic and acidic residues); it reads GKKDKQKPAKSEE. The span at 152–181 shows a compositional bias: low complexity; sequence ATSPTSGTTSPTTAEAEAAPAGDAAVAEPS. Positions 216–227 are enriched in basic and acidic residues; sequence EQEKQANGETEK. The span at 246–262 shows a compositional bias: low complexity; it reads EPATVTATESNTTATEE. The tract at residues 345-725 is interaction with PKA-R2; that stretch reads ASSEVIETVT…AEQEGESNNK (381 aa). Pro residues predominate over residues 468-480; it reads SPPPPLPKSPPPS. Residues 532 to 544 are compositionally biased toward basic and acidic residues; sequence EQEKQQEEAKVDS. Residues 545–561 are compositionally biased toward low complexity; the sequence is VPETIEESSSTVVVEEV. Positions 578-594 are enriched in basic and acidic residues; the sequence is DVQKPIEDQDTPDEKES. A compositionally biased stretch (low complexity) spans 626–638; it reads SISSNVAESSSVS. A compositionally biased stretch (basic and acidic residues) spans 674–684; the sequence is EEAHSDNDKEN.

In terms of assembly, homodimer. Interacts with Cam; interaction is calcium-dependent and is inhibited by PKC-mediated phosphorylation of Akap200. Interacts with N/Notch; the interaction stabilizes N/Notch protein levels by preventing Cbl-mediated ubiquitination and subsequent lysosomal degradation of N/Notch. Interacts with Pka-R2. Binds to F-actin; interaction is independent of myristoylation, but is inhibited by Akap200 phosphorylation and Cam binding. Isoform B: Does not bind to Pka-R2. Post-translationally, myristoylated; myristoylation promotes accumulation at the cell periphery. Phosphorylated; phosphorylation prevents binding to F-actin and Cam. In terms of tissue distribution, detected in the brain in both neurons and glia (including perineurial glia); specifically in the neuronal nuclei in the cortex and synaptic neuropil (at protein level). Detected in germline cells, somatic follicle cells and outer rim of the ring canals during oogenesis (at protein level). Isoform A: Detected in the adult (at protein level). Isoform B: Detected in the adult with higher levels in the head (at protein level).

The protein localises to the cytoplasm. It localises to the cytosol. The protein resides in the cell membrane. Its subcellular location is the cytoskeleton. Functionally, scaffolding protein involved in the regulation of PKA signaling and anchoring to the actin cytoskeleton integrating signals propagated by cAMP, diacylglycerol and calcium. Contributes to the maintenance and regulation of cytoskeletal structures in germline via PKA-mediated signaling. As part of ethanol response in the glia, mediates ethanol-induced structural remodeling of actin cytoskeleton and perineurial membrane topology by anchoring PKA to the membrane of perineurial glia. In specific tissues such as eye and thorax, promotes N/Notch protein stability by inhibiting Cbl-mediated ubiquitination and lysosomal degradation pathway of N/Notch in a PKA-independent way. In the circadian brain neurons evening cells (E-cells), might have a role in circadian pacemaker synchronization by playing a redundant role in signaling downstream of the G protein-couple receptor Pdfr. This is A-kinase anchor protein 200 from Drosophila melanogaster (Fruit fly).